A 244-amino-acid chain; its full sequence is Leucyl/phenylalanyl-tRNA--protein transferase (244 aa).

It belongs to the L/F-transferase family.

The protein localises to the cytoplasm. It carries out the reaction N-terminal L-lysyl-[protein] + L-leucyl-tRNA(Leu) = N-terminal L-leucyl-L-lysyl-[protein] + tRNA(Leu) + H(+). It catalyses the reaction N-terminal L-arginyl-[protein] + L-leucyl-tRNA(Leu) = N-terminal L-leucyl-L-arginyl-[protein] + tRNA(Leu) + H(+). The enzyme catalyses L-phenylalanyl-tRNA(Phe) + an N-terminal L-alpha-aminoacyl-[protein] = an N-terminal L-phenylalanyl-L-alpha-aminoacyl-[protein] + tRNA(Phe). In terms of biological role, functions in the N-end rule pathway of protein degradation where it conjugates Leu, Phe and, less efficiently, Met from aminoacyl-tRNAs to the N-termini of proteins containing an N-terminal arginine or lysine. In Janthinobacterium sp. (strain Marseille) (Minibacterium massiliensis), this protein is Leucyl/phenylalanyl-tRNA--protein transferase.